Consider the following 215-residue polypeptide: Probable phosphoglycerate mutase GpmB (215 aa).

Residues 8-15, 21-22, R58, R60, 82-85, 104-105, and 151-152 contribute to the substrate site; these read RHGETQWN, QG, ELNM, RR, and GI. Residue H9 is the Tele-phosphohistidine intermediate of the active site. Residue E82 is the Proton donor/acceptor of the active site.

Belongs to the phosphoglycerate mutase family. GpmB subfamily.

It carries out the reaction (2R)-2-phosphoglycerate = (2R)-3-phosphoglycerate. The protein operates within carbohydrate degradation; glycolysis; pyruvate from D-glyceraldehyde 3-phosphate: step 3/5. The chain is Probable phosphoglycerate mutase GpmB from Shigella dysenteriae serotype 1 (strain Sd197).